We begin with the raw amino-acid sequence, 327 residues long: o-succinylbenzoate synthase (327 aa).

The active-site Proton donor is Lys110. Residues Asp138, Glu165, and Asp188 each contribute to the Mg(2+) site. Lys212 acts as the Proton acceptor in catalysis.

Belongs to the mandelate racemase/muconate lactonizing enzyme family. MenC type 1 subfamily. Requires a divalent metal cation as cofactor.

It carries out the reaction (1R,6R)-6-hydroxy-2-succinyl-cyclohexa-2,4-diene-1-carboxylate = 2-succinylbenzoate + H2O. The protein operates within quinol/quinone metabolism; 1,4-dihydroxy-2-naphthoate biosynthesis; 1,4-dihydroxy-2-naphthoate from chorismate: step 4/7. Its pathway is quinol/quinone metabolism; menaquinone biosynthesis. Its function is as follows. Converts 2-succinyl-6-hydroxy-2,4-cyclohexadiene-1-carboxylate (SHCHC) to 2-succinylbenzoate (OSB). The sequence is that of o-succinylbenzoate synthase from Mycobacterium marinum (strain ATCC BAA-535 / M).